The chain runs to 131 residues: Small ribosomal subunit protein bS6 (131 aa).

Residues 94–131 form a disordered region; the sequence is DAVTEESQLAKNADEKRARKATTRRPDSNDDNDNHSDD. The span at 117-131 shows a compositional bias: basic and acidic residues; the sequence is RRPDSNDDNDNHSDD.

It belongs to the bacterial ribosomal protein bS6 family.

Binds together with bS18 to 16S ribosomal RNA. The chain is Small ribosomal subunit protein bS6 from Psychrobacter cryohalolentis (strain ATCC BAA-1226 / DSM 17306 / VKM B-2378 / K5).